The following is a 374-amino-acid chain: Gustatory receptor 23a (374 aa).

Over 1-6 the chain is Cytoplasmic; the sequence is MFPPTR. A helical membrane pass occupies residues 7–27; the sequence is VQASSRVVLKIFHFILVAFSL. Over 28 to 36 the chain is Extracellular; sequence RSRRLSRLV. The helical transmembrane segment at 37–57 threads the bilayer; the sequence is LWLQFLGWLTWFISMWTQSVI. At 58–72 the chain is on the cytoplasmic side; the sequence is YAQTIDCTLDCSLRH. The helical transmembrane segment at 73–93 threads the bilayer; that stretch reads ILTFFQTVSHAFIVVTSFLDG. Topologically, residues 94–112 are extracellular; that stretch reads FRIKQDQLDEPIAFEDSDP. A helical membrane pass occupies residues 113 to 133; the sequence is WLAFTVLAMLVPTLGVEYLVC. Topologically, residues 134–226 are cytoplasmic; that stretch reads SNAPEYAFRI…YNDLHYLFVR (93 aa). Residues 227–247 form a helical membrane-spanning segment; that stretch reads INGYFGGSLLTIIIVHFAIFV. Over 248-263 the chain is Extracellular; the sequence is SNSYWLFVDIRTRPWR. Residues 264-284 traverse the membrane as a helical segment; the sequence is IYAILLNLGFIFNVALQMAAA. The Cytoplasmic portion of the chain corresponds to 285 to 343; it reads CWHCQQSYNLGRQIGCLISKLVKPQGSKLYNDLVSEFSLQTLHQRFVVTAKDFFSLNLH. A helical transmembrane segment spans residues 344 to 364; the sequence is LLSSMFAAVVTYLVILIQFMF. Over 365-374 the chain is Extracellular; the sequence is AERSSTRGSG.

It belongs to the insect chemoreceptor superfamily. Gustatory receptor (GR) family. Gr2a subfamily. As to expression, expressed in the adult labellar chemosensory neurons and labral sense organ. Expressed in neurons of the dorsal pharyngeal sense organ of larvae.

It localises to the cell membrane. Its function is as follows. Probable gustatory receptor which mediates acceptance or avoidance behavior, depending on its substrates. The chain is Gustatory receptor 23a (Gr23a) from Drosophila melanogaster (Fruit fly).